The primary structure comprises 308 residues: Ribosomal RNA large subunit methyltransferase F (308 aa).

The protein belongs to the methyltransferase superfamily. METTL16/RlmF family.

Its subcellular location is the cytoplasm. It carries out the reaction adenosine(1618) in 23S rRNA + S-adenosyl-L-methionine = N(6)-methyladenosine(1618) in 23S rRNA + S-adenosyl-L-homocysteine + H(+). In terms of biological role, specifically methylates the adenine in position 1618 of 23S rRNA. The chain is Ribosomal RNA large subunit methyltransferase F from Escherichia fergusonii (strain ATCC 35469 / DSM 13698 / CCUG 18766 / IAM 14443 / JCM 21226 / LMG 7866 / NBRC 102419 / NCTC 12128 / CDC 0568-73).